The sequence spans 485 residues: Noelin (485 aa).

An N-terminal signal peptide occupies residues 1–16; sequence MSVPLLKIGVVLSTMA. N-linked (GlcNAc...) asparagine glycans are attached at residues Asn-33, Asn-103, Asn-187, Asn-288, Asn-307, Asn-394, Asn-431, and Asn-473. The stretch at 87–225 forms a coiled coil; the sequence is RDARTKQLRQ…ERLRACMQKL (139 aa). One can recognise an Olfactomedin-like domain in the interval 226 to 478; the sequence is ACGKLTGISD…QILYNVTLFH (253 aa). A disulfide bond links Cys-227 and Cys-409.

Homotetramer; disulfide-linked. Dimer of dimers, giving rise to a V-shaped homotretramer. Isoform 1 and isoform 3 interact with RTN4R. Identified in a complex with RTN4R and LINGO1. Peripherally associated with AMPAR complex. AMPAR complex consists of an inner core made of 4 pore-forming GluA/GRIA proteins (GRIA1, GRIA2, GRIA3 and GRIA4) and 4 major auxiliary subunits arranged in a twofold symmetry. One of the two pairs of distinct binding sites is occupied either by CNIH2, CNIH3 or CACNG2, CACNG3. The other harbors CACNG2, CACNG3, CACNG4, CACNG8 or GSG1L. This inner core of AMPAR complex is complemented by outer core constituents binding directly to the GluA/GRIA proteins at sites distinct from the interaction sites of the inner core constituents. Outer core constituents include at least PRRT1, PRRT2, CKAMP44/SHISA9, FRRS1L and NRN1. The proteins of the inner and outer core serve as a platform for other, more peripherally associated AMPAR constituents, including OLFM1. Alone or in combination, these auxiliary subunits control the gating and pharmacology of the AMPAR complex and profoundly impact their biogenesis and protein processing. Interacts with OLFM2.

Its subcellular location is the secreted. It localises to the synapse. The protein localises to the endoplasmic reticulum. It is found in the cell projection. The protein resides in the axon. Its subcellular location is the perikaryon. Contributes to the regulation of axonal growth in the embryonic and adult central nervous system by inhibiting interactions between RTN4R and LINGO1. Inhibits RTN4R-mediated axon growth cone collapse. May play an important role in regulating the production of neural crest cells by the neural tube. May be required for normal responses to olfactory stimuli. The protein is Noelin (OLFM1) of Homo sapiens (Human).